Consider the following 67-residue polypeptide: Large ribosomal subunit protein uL29 (67 aa).

Belongs to the universal ribosomal protein uL29 family.

This chain is Large ribosomal subunit protein uL29, found in Desulfitobacterium hafniense (strain DSM 10664 / DCB-2).